We begin with the raw amino-acid sequence, 262 residues long: tRNA pseudouridine synthase A (262 aa).

Asp54 acts as the Nucleophile in catalysis. A substrate-binding site is contributed by Tyr113.

It belongs to the tRNA pseudouridine synthase TruA family. As to quaternary structure, homodimer.

The enzyme catalyses uridine(38/39/40) in tRNA = pseudouridine(38/39/40) in tRNA. Formation of pseudouridine at positions 38, 39 and 40 in the anticodon stem and loop of transfer RNAs. In Lactobacillus acidophilus (strain ATCC 700396 / NCK56 / N2 / NCFM), this protein is tRNA pseudouridine synthase A.